A 339-amino-acid polypeptide reads, in one-letter code: Nicotinate-nucleotide--dimethylbenzimidazole phosphoribosyltransferase (339 aa).

Catalysis depends on glutamate 306, which acts as the Proton acceptor.

It belongs to the CobT family.

It catalyses the reaction 5,6-dimethylbenzimidazole + nicotinate beta-D-ribonucleotide = alpha-ribazole 5'-phosphate + nicotinate + H(+). Its pathway is nucleoside biosynthesis; alpha-ribazole biosynthesis; alpha-ribazole from 5,6-dimethylbenzimidazole: step 1/2. Functionally, catalyzes the synthesis of alpha-ribazole-5'-phosphate from nicotinate mononucleotide (NAMN) and 5,6-dimethylbenzimidazole (DMB). The sequence is that of Nicotinate-nucleotide--dimethylbenzimidazole phosphoribosyltransferase from Brucella canis (strain ATCC 23365 / NCTC 10854 / RM-666).